We begin with the raw amino-acid sequence, 220 residues long: Fructose-6-phosphate aldolase (220 aa).

Residue Lys85 is the Schiff-base intermediate with substrate of the active site.

Belongs to the transaldolase family. Type 3A subfamily. As to quaternary structure, homodecamer.

Its subcellular location is the cytoplasm. The enzyme catalyses beta-D-fructose 6-phosphate = dihydroxyacetone + D-glyceraldehyde 3-phosphate. In terms of biological role, catalyzes the reversible formation of fructose 6-phosphate from dihydroxyacetone and D-glyceraldehyde 3-phosphate via an aldolization reaction. This chain is Fructose-6-phosphate aldolase, found in Enterobacter sp. (strain 638).